The sequence spans 76 residues: Large ribosomal subunit protein eL20 (76 aa).

It belongs to the eukaryotic ribosomal protein eL20 family. As to quaternary structure, part of the 50S ribosomal subunit. Binds 23S rRNA.

This chain is Large ribosomal subunit protein eL20, found in Methanococcus vannielii (strain ATCC 35089 / DSM 1224 / JCM 13029 / OCM 148 / SB).